We begin with the raw amino-acid sequence, 196 residues long: UPF0319 protein VV1_0237 (196 aa).

The N-terminal stretch at 1–19 (MKKMMILSALALFSSSLFA) is a signal peptide.

This sequence belongs to the UPF0319 family.

The chain is UPF0319 protein VV1_0237 from Vibrio vulnificus (strain CMCP6).